The chain runs to 405 residues: MRSLPNVLAIVLAGGEGKRLFPLTEDRAKPAVPFGGSYRLIDFVLSNLVNAGFLKIAVLTQYKSHSLDRHISQAWNLSGPTPQYIASVPAQQRRGKRWYNGSADAILQSLNLIYDEKPDYVIVFGADHVYRMDPAQMVEEHIATGLDCSVAGIRVPRSEASAFGCIQADGMGTITEFVEKPENPPATPDDPNMTYASMGNYVFTTQALIDALLEDEKNEDSAHDMGGNIIPYFVEREQAHVYDFMANEVPGSTERDHGYWRDVGTIDSFYEAHMDMISVHPIFNLYNRSWPIHSTDDSNFPPAKFVQNGIAQSSMVAPGCIVSGGTVRNSVLASDVHVADGATVEGSVILPGVRIGRGAVVRHAILDKNVVVSDGAIIGVDRERDEERFKVSEGGVVVVGKNVKV.

Alpha-D-glucose 1-phosphate is bound by residues tyrosine 99, glycine 164, 179-180 (EK), and serine 197.

Belongs to the bacterial/plant glucose-1-phosphate adenylyltransferase family. As to quaternary structure, homotetramer.

The enzyme catalyses alpha-D-glucose 1-phosphate + ATP + H(+) = ADP-alpha-D-glucose + diphosphate. It functions in the pathway glycan biosynthesis; glycogen biosynthesis. Involved in the biosynthesis of ADP-glucose, a building block required for the elongation reactions to produce glycogen. Catalyzes the reaction between ATP and alpha-D-glucose 1-phosphate (G1P) to produce pyrophosphate and ADP-Glc. The chain is Glucose-1-phosphate adenylyltransferase from Corynebacterium aurimucosum (strain ATCC 700975 / DSM 44827 / CIP 107346 / CN-1) (Corynebacterium nigricans).